The sequence spans 159 residues: Cyclic pyranopterin monophosphate synthase (159 aa).

Residues 76 to 78 (LCH) and 114 to 115 (ME) contribute to the substrate site. Asp129 is an active-site residue.

This sequence belongs to the MoaC family. As to quaternary structure, homohexamer; trimer of dimers.

The enzyme catalyses (8S)-3',8-cyclo-7,8-dihydroguanosine 5'-triphosphate = cyclic pyranopterin phosphate + diphosphate. Its pathway is cofactor biosynthesis; molybdopterin biosynthesis. Functionally, catalyzes the conversion of (8S)-3',8-cyclo-7,8-dihydroguanosine 5'-triphosphate to cyclic pyranopterin monophosphate (cPMP). This Oleidesulfovibrio alaskensis (strain ATCC BAA-1058 / DSM 17464 / G20) (Desulfovibrio alaskensis) protein is Cyclic pyranopterin monophosphate synthase.